Reading from the N-terminus, the 404-residue chain is Argininosuccinate synthase (404 aa).

ATP contacts are provided by residues 10–18 and Ala-38; that span reads AYSGGVDTS. Tyr-89 lines the L-citrulline pocket. Gly-119 contacts ATP. 3 residues coordinate L-aspartate: Thr-121, Asn-125, and Asp-126. Residue Asn-125 participates in L-citrulline binding. The L-citrulline site is built by Arg-129, Ser-177, Ser-186, Glu-262, and Tyr-274.

It belongs to the argininosuccinate synthase family. Type 1 subfamily. As to quaternary structure, homotetramer.

The protein localises to the cytoplasm. It carries out the reaction L-citrulline + L-aspartate + ATP = 2-(N(omega)-L-arginino)succinate + AMP + diphosphate + H(+). It functions in the pathway amino-acid biosynthesis; L-arginine biosynthesis; L-arginine from L-ornithine and carbamoyl phosphate: step 2/3. The polypeptide is Argininosuccinate synthase (Prochlorococcus marinus (strain AS9601)).